The chain runs to 38 residues: Glutathione S-transferase 2 (38 aa).

It belongs to the GST superfamily. Phi family.

It carries out the reaction RX + glutathione = an S-substituted glutathione + a halide anion + H(+). Functionally, conjugation of reduced glutathione to a wide number of exogenous and endogenous hydrophobic electrophiles. In plants, may have a detoxification role against certain herbicides. This is Glutathione S-transferase 2 from Populus euphratica (Euphrates poplar).